The chain runs to 362 residues: Glutamate--cysteine ligase (362 aa).

Belongs to the glutamate--cysteine ligase type 2 family. YbdK subfamily.

The enzyme catalyses L-cysteine + L-glutamate + ATP = gamma-L-glutamyl-L-cysteine + ADP + phosphate + H(+). In terms of biological role, catalyzes the synthesis of gamma-glutamylcysteine (gamma-GC), the main low-molecular-weight thiol compound instead of glutathione in halophilic archaea. The protein is Glutamate--cysteine ligase of Natronomonas pharaonis (strain ATCC 35678 / DSM 2160 / CIP 103997 / JCM 8858 / NBRC 14720 / NCIMB 2260 / Gabara) (Halobacterium pharaonis).